Consider the following 960-residue polypeptide: Dynamin-like GTPase OPA1, mitochondrial (960 aa).

A mitochondrion-targeting transit peptide spans 1 to 87 (MWRLRRAAVA…IKYGYQPRRN (87 aa)). The Mitochondrial matrix portion of the chain corresponds to 88-96 (FWPARLATR). The helical transmembrane segment at 97–113 (LLKLRYLILGSAVGGGY) threads the bilayer. Residues 114–770 (TAKKTFDQWK…NAIENMVGPD (657 aa)) are Mitochondrial intermembrane-facing. Positions 210–254 (SDKEKIDQLQEELLHTQLKYQRILERLEKENKELRKLVLQKDDKG) form a coiled coil. Lys-228 is subject to N6-acetyllysine. Residues 285-561 (QDHLPRVVVV…FWKMVRESVE (277 aa)) enclose the Dynamin-type G domain. A G1 motif region spans residues 295 to 302 (GDQSAGKT). GTP-binding residues include Ser-298, Gly-300, Lys-301, Thr-302, Ser-303, and Gly-317. Thr-302 is a Mg(2+) binding site. The G2 motif stretch occupies residues 321-324 (MMTR). Mg(2+) is bound by residues Thr-323 and Asp-398. A G3 motif region spans residues 398 to 401 (DLPG). The tract at residues 467–470 (TKVD) is G4 motif. Positions 468, 470, and 503 each coordinate GTP. Positions 501-504 (VVTG) are G5 motif. 2 stalk region regions span residues 589 to 836 (DRNE…IKDT) and 874 to 928 (CNDV…IKLL). The interval 736 to 856 (SDKQQWDAAI…KTALNHCNLC (121 aa)) is paddle region. Residues 771 to 781 (WKKRWLYWKNR) lie within the membrane without spanning it. Over 782 to 960 (TQEQCVHNET…AFIEALHQEK (179 aa)) the chain is Mitochondrial intermembrane. Cys-856 and Cys-874 are oxidised to a cystine. The stretch at 895–960 (RQQLTNTEVR…AFIEALHQEK (66 aa)) forms a coiled coil.

It belongs to the TRAFAC class dynamin-like GTPase superfamily. Dynamin/Fzo/YdjA family. In terms of assembly, oligomeric complex consisting of membrane-bound and soluble forms of OPA1. Interacts with RCC1L; RCC1L acts as a guanine nucleotide exchange factor (GEF) for OPA1 by exchanging bound GDP for free GTP. Interacts with CHCHD3 and IMMT; these interactions occur preferentially with soluble OPA1 forms. Interacts with PRELID1. In terms of processing, cleaved by OMA1 or YME1L downstream of the transmembrane region in response to different signals to generate soluble forms. Cleaved by OMA1 at position S1 following stress conditions, generating the short soluble form (Dynamin-like GTPase OPA1, short form; S-OPA1). AFG3L2 is involved in the regulation of OMA1-dependent processing of OPA1. PARL-dependent proteolytic processing releases an antiapoptotic soluble form not required for mitochondrial fusion.

Its subcellular location is the mitochondrion inner membrane. It localises to the mitochondrion intermembrane space. The catalysed reaction is GTP + H2O = GDP + phosphate + H(+). Activated by guanine nucleotide exchange factor RCC1L. Its function is as follows. Dynamin-related GTPase that is essential for normal mitochondrial morphology by mediating fusion of the mitochondrial inner membranes, regulating cristae morphology and maintaining respiratory chain function. Exists in two forms: the transmembrane, long form (Dynamin-like GTPase OPA1, long form; L-OPA1), which is tethered to the inner mitochondrial membrane, and the short soluble form (Dynamin-like GTPase OPA1, short form; S-OPA1), which results from proteolytic cleavage and localizes in the intermembrane space. Both forms (L-OPA1 and S-OPA1) cooperate to catalyze the fusion of the mitochondrial inner membrane. The equilibrium between L-OPA1 and S-OPA1 is essential: excess levels of S-OPA1, produced by cleavage by OMA1 following loss of mitochondrial membrane potential, lead to an impaired equilibrium between L-OPA1 and S-OPA1, inhibiting mitochondrial fusion. The balance between L-OPA1 and S-OPA1 also influences cristae shape and morphology. Involved in remodeling cristae and the release of cytochrome c during apoptosis. Proteolytic processing by PARL in response to intrinsic apoptotic signals may lead to disassembly of OPA1 oligomers and release of the caspase activator cytochrome C (CYCS) into the mitochondrial intermembrane space. Acts as a regulator of T-helper Th17 cells, which are characterized by cells with fused mitochondria with tight cristae, by mediating mitochondrial membrane remodeling: OPA1 is required for interleukin-17 (IL-17) production. Its role in mitochondrial morphology is required for mitochondrial genome maintenance. In terms of biological role, constitutes the transmembrane long form (L-OPA1) that plays a central role in mitochondrial inner membrane fusion and cristae morphology. L-OPA1 and the soluble short form (S-OPA1) form higher-order helical assemblies that coordinate the fusion of mitochondrial inner membranes. Inner membrane-anchored L-OPA1 molecules initiate membrane remodeling by recruiting soluble S-OPA1 to rapidly polymerize into a flexible cylindrical scaffold encaging the mitochondrial inner membrane. Once at the membrane surface, the formation of S-OPA1 helices induce bilayer curvature. OPA1 dimerization through the paddle region, which inserts into cardiolipin-containing membrane, promotes GTP hydrolysis and the helical assembly of a flexible OPA1 lattice on the membrane, which drives membrane curvature and mitochondrial fusion. Plays a role in the maintenance and remodeling of mitochondrial cristae, some invaginations of the mitochondrial inner membrane that provide an increase in the surface area. Probably acts by forming helical filaments at the inside of inner membrane tubes with the shape and dimensions of crista junctions. The equilibrium between L-OPA1 and S-OPA1 influences cristae shape and morphology: increased L-OPA1 levels promote cristae stacking and elongated mitochondria, while increased S-OPA1 levels correlated with irregular cristae packing and round mitochondria shape. Functionally, constitutes the soluble short form (S-OPA1) generated by cleavage by OMA1, which plays a central role in mitochondrial inner membrane fusion and cristae morphology. The transmembrane long form (L-OPA1) and the S-OPA1 form higher-order helical assemblies that coordinate the fusion of mitochondrial inner membranes. Inner membrane-anchored L-OPA1 molecules initiate membrane remodeling by recruiting soluble S-OPA1 to rapidly polymerize into a flexible cylindrical scaffold encaging the mitochondrial inner membrane. Once at the membrane surface, the formation of S-OPA1 helices induce bilayer curvature. OPA1 dimerization through the paddle region, which inserts into cardiolipin-containing membrane, promotes GTP hydrolysis and the helical assembly of a flexible OPA1 lattice on the membrane, which drives membrane curvature and mitochondrial fusion. Excess levels of S-OPA1 produced by cleavage by OMA1 following stress conditions that induce loss of mitochondrial membrane potential, lead to an impaired equilibrium between L-OPA1 and S-OPA1, thereby inhibiting mitochondrial fusion. Involved in mitochondrial safeguard in response to transient mitochondrial membrane depolarization by mediating flickering: cleavage by OMA1 leads to excess production of S-OPA1, preventing mitochondrial hyperfusion. Plays a role in the maintenance and remodeling of mitochondrial cristae, some invaginations of the mitochondrial inner membrane that provide an increase in the surface area. Probably acts by forming helical filaments at the inside of inner membrane tubes with the shape and dimensions of crista junctions. The equilibrium between L-OPA1 and S-OPA1 influences cristae shape and morphology: increased L-OPA1 levels promote cristae stacking and elongated mitochondria, while increased S-OPA1 levels correlated with irregular cristae packing and round mitochondria shape. The polypeptide is Dynamin-like GTPase OPA1, mitochondrial (Pongo abelii (Sumatran orangutan)).